The primary structure comprises 491 residues: Ketol-acid reductoisomerase (NADP(+)) (491 aa).

Residues A15 to S208 form the KARI N-terminal Rossmann domain. NADP(+)-binding positions include C45–Q48, R68, R76, S78, and D108–Q110. Residue H132 is part of the active site. G158 provides a ligand contact to NADP(+). KARI C-terminal knotted domains follow at residues S209–Q344 and Y345–M484. The Mg(2+) site is built by D217, E221, E389, and E393. S414 is a substrate binding site.

This sequence belongs to the ketol-acid reductoisomerase family. The cofactor is Mg(2+).

The enzyme catalyses (2R)-2,3-dihydroxy-3-methylbutanoate + NADP(+) = (2S)-2-acetolactate + NADPH + H(+). The catalysed reaction is (2R,3R)-2,3-dihydroxy-3-methylpentanoate + NADP(+) = (S)-2-ethyl-2-hydroxy-3-oxobutanoate + NADPH + H(+). Its pathway is amino-acid biosynthesis; L-isoleucine biosynthesis; L-isoleucine from 2-oxobutanoate: step 2/4. It participates in amino-acid biosynthesis; L-valine biosynthesis; L-valine from pyruvate: step 2/4. In terms of biological role, involved in the biosynthesis of branched-chain amino acids (BCAA). Catalyzes an alkyl-migration followed by a ketol-acid reduction of (S)-2-acetolactate (S2AL) to yield (R)-2,3-dihydroxy-isovalerate. In the isomerase reaction, S2AL is rearranged via a Mg-dependent methyl migration to produce 3-hydroxy-3-methyl-2-ketobutyrate (HMKB). In the reductase reaction, this 2-ketoacid undergoes a metal-dependent reduction by NADPH to yield (R)-2,3-dihydroxy-isovalerate. The polypeptide is Ketol-acid reductoisomerase (NADP(+)) (Escherichia coli (strain ATCC 8739 / DSM 1576 / NBRC 3972 / NCIMB 8545 / WDCM 00012 / Crooks)).